The chain runs to 104 residues: L-rhamnose mutarotase (104 aa).

Residue Tyr18 coordinates substrate. His22 serves as the catalytic Proton donor. Substrate is bound by residues Tyr41 and 76-77 (WW).

The protein belongs to the rhamnose mutarotase family. As to quaternary structure, homodimer.

The protein localises to the cytoplasm. The catalysed reaction is alpha-L-rhamnose = beta-L-rhamnose. Its pathway is carbohydrate metabolism; L-rhamnose metabolism. Involved in the anomeric conversion of L-rhamnose. The chain is L-rhamnose mutarotase from Listeria monocytogenes serovar 1/2a (strain ATCC BAA-679 / EGD-e).